Consider the following 707-residue polypeptide: Serine/threonine protein kinase UL97 (707 aa).

Positions 1 to 14 are enriched in low complexity; the sequence is MSSALRSRARSASL. Disordered regions lie at residues 1–33, 113–146, 176–198, and 231–264; these read MSSA…SRAR, DGEK…GDGY, FTGG…RPLR, and ESQD…EADS. Over residues 113 to 127 the composition is skewed to basic and acidic residues; the sequence is DGEKEDAASDKENLR. Low complexity predominate over residues 178–188; that stretch reads GGSDPSDSVSG. ATP contacts are provided by residues 337–345 and K359; that span reads LGQGSFGEV. The active-site Proton acceptor is the D456.

The protein belongs to the protein kinase superfamily. Tyr protein kinase family. HCMV ganciclovir subfamily. Interacts with UL83. Post-translationally, autophosphorylates on serine and threonine residues.

It localises to the virion. It carries out the reaction L-seryl-[protein] + ATP = O-phospho-L-seryl-[protein] + ADP + H(+). The catalysed reaction is L-threonyl-[protein] + ATP = O-phospho-L-threonyl-[protein] + ADP + H(+). Serine/threonine protein kinase that plays important roles in several processes including nuclear viral egress, viral replication or regulation of host cell cycle progression. Participates in the acquisition of tegument during virion morphogenesis in the nucleus. Phosphorylates the viral nuclear egress complex (NEC) subunits UL50 and UL53. Redistributes the host nuclear lamina by phosphorylating cellular Lamins-A/C. Plays a role in viral DNA synthesis by phosphorylating the DNA polymerase processivity factor UL44. Stimulates host cell cycle to support viral DNA synthesis by phosphorylating host retinoblastoma/RB1 protein. Additional substrates have been identified including host EF1D or H2B. Also phosphorylates host SAMHD1 and thereby counteracts its antiviral effect by reducing its dNTP hydrolase activity. The sequence is that of Serine/threonine protein kinase UL97 (UL97) from Human cytomegalovirus (strain AD169) (HHV-5).